The primary structure comprises 726 residues: Ribonuclease R (726 aa).

The region spanning 264–592 (RKDLTELAFV…TVHRLLWMNL (329 aa)) is the RNB domain. One can recognise an S1 motif domain in the interval 645–726 (GQTFHGFISA…VQKRAILTLV (82 aa)).

It belongs to the RNR ribonuclease family. RNase R subfamily.

It localises to the cytoplasm. The enzyme catalyses Exonucleolytic cleavage in the 3'- to 5'-direction to yield nucleoside 5'-phosphates.. Its function is as follows. 3'-5' exoribonuclease that releases 5'-nucleoside monophosphates and is involved in maturation of structured RNAs. In Mycoplasma pneumoniae (strain ATCC 29342 / M129 / Subtype 1) (Mycoplasmoides pneumoniae), this protein is Ribonuclease R.